Reading from the N-terminus, the 339-residue chain is Anthranilate phosphoribosyltransferase (339 aa).

5-phospho-alpha-D-ribose 1-diphosphate contacts are provided by residues Gly-81, 84–85 (GD), Ser-89, 91–94 (NVSS), 109–117 (KHGNRALSS), and Ala-121. Gly-81 is a binding site for anthranilate. Residue Ser-93 coordinates Mg(2+). Asn-112 is an anthranilate binding site. Arg-167 is an anthranilate binding site. Mg(2+) is bound by residues Asp-225 and Glu-226.

This sequence belongs to the anthranilate phosphoribosyltransferase family. As to quaternary structure, homodimer. The cofactor is Mg(2+).

It catalyses the reaction N-(5-phospho-beta-D-ribosyl)anthranilate + diphosphate = 5-phospho-alpha-D-ribose 1-diphosphate + anthranilate. The protein operates within amino-acid biosynthesis; L-tryptophan biosynthesis; L-tryptophan from chorismate: step 2/5. Its function is as follows. Catalyzes the transfer of the phosphoribosyl group of 5-phosphorylribose-1-pyrophosphate (PRPP) to anthranilate to yield N-(5'-phosphoribosyl)-anthranilate (PRA). The polypeptide is Anthranilate phosphoribosyltransferase (Brucella suis (strain ATCC 23445 / NCTC 10510)).